Reading from the N-terminus, the 165-residue chain is Copper-resistant cuproprotein CopI (165 aa).

Residues 1–23 (MKNRILRPALLCVAALFATTAQA) form the signal peptide. Basic and acidic residues predominate over residues 25–42 (AGHDHGSAHAGAHAHDAD). The disordered stretch occupies residues 25-50 (AGHDHGSAHAGAHAHDADTPYGRPGD). Cu(2+)-binding residues include histidine 93, cysteine 148, histidine 153, and methionine 158.

Belongs to the CopI family. Monomer.

It localises to the periplasm. Involved in copper tolerance. Required for copper resistance under both aerobic and anaerobic photosynthetic growth conditions. Binds copper. Could be an important defense against copper in the periplasm and may protect not only c type cytochromes but also other proteins with cysteine residues from copper ions that may catalyze nonnative disulfide bond formation. This chain is Copper-resistant cuproprotein CopI, found in Rubrivivax gelatinosus (Rhodocyclus gelatinosus).